The chain runs to 287 residues: Probable endonuclease LCL3 (287 aa).

Positions 1-40 (MPWPFGPSGSSEAPPPQKPRDDKVEGREPAKSWNSLLPKP) are disordered. Over residues 18–30 (KPRDDKVEGREPA) the composition is skewed to basic and acidic residues. The chain crosses the membrane as a helical span at residues 50 to 67 (WAPVFLTAVGSLAAFMFY). The region spanning 88-246 (RSLLGRVTSV…KAKKLGLWSI (159 aa)) is the TNase-like domain. Arg137 is a catalytic residue. Asp142 contacts Ca(2+). Active-site residues include Glu145 and Arg185. The span at 254–272 (PRDFKNRTQGNEKSERDVE) shows a compositional bias: basic and acidic residues. The tract at residues 254–278 (PRDFKNRTQGNEKSERDVEGSTVQK) is disordered.

This sequence belongs to the LCL3 family.

The protein localises to the mitochondrion. Its subcellular location is the membrane. This chain is Probable endonuclease LCL3 (LCL3), found in Verticillium alfalfae (strain VaMs.102 / ATCC MYA-4576 / FGSC 10136) (Verticillium wilt of alfalfa).